The following is a 638-amino-acid chain: Plasma kallikrein (638 aa).

Positions 1–19 (MILFKQATYFISLFATVSC) are cleaved as a signal peptide. Apple domains are found at residues 21 to 104 (CLTQ…LKQC), 111 to 194 (CHRD…LKPC), 201 to 284 (CHMN…LLTC), and 292 to 375 (CHSK…LRLC). 18 cysteine pairs are disulfide-bonded: Cys21/Cys104, Cys47/Cys77, Cys51/Cys57, Cys111/Cys194, Cys137/Cys166, Cys141/Cys147, Cys201/Cys284, Cys227/Cys256, Cys231/Cys237, Cys292/Cys375, Cys318/Cys347, Cys322/Cys328, Cys340/Cys345, Cys383/Cys503, Cys419/Cys435, Cys517/Cys584, Cys548/Cys563, and Cys574/Cys602. Asn127 carries an N-linked (GlcNAc...) asparagine glycan. N-linked (GlcNAc...) asparagine glycosylation is present at Asn308. In terms of domain architecture, Peptidase S1 spans 391–626 (IVGGTNSSWG…YMDWILEKTQ (236 aa)). A glycan (N-linked (GlcNAc...) asparagine) is linked at Asn396. The active-site Charge relay system is the His434. The N-linked (GlcNAc...) asparagine glycan is linked to Asn453. Asp483 (charge relay system) is an active-site residue. The N-linked (GlcNAc...) asparagine glycan is linked to Asn494. Residue Ser578 is the Charge relay system of the active site.

Belongs to the peptidase S1 family. Plasma kallikrein subfamily. As to quaternary structure, forms a heterodimer with SERPINA5. The zymogen is activated by factor XIIa, which cleaves the molecule into a light chain, which contains the active site, and a heavy chain, which associates with HMW kininogen. These chains are linked by one or more disulfide bonds. Interacts with iripin-3, a serine protease inhibitor from Ixodes ricinus saliva. Interacts with iripin-1, a serine protease inhibitor from Ixodes ricinus saliva. Found in plasma (at protein level).

It is found in the secreted. The catalysed reaction is Cleaves selectively Arg-|-Xaa and Lys-|-Xaa bonds, including Lys-|-Arg and Arg-|-Ser bonds in (human) kininogen to release bradykinin.. Inhibited by SERPINA5. Participates in the surface-dependent activation of blood coagulation. Activates, in a reciprocal reaction, coagulation factor XII/F12 after binding to negatively charged surfaces. Releases bradykinin from HMW kininogen and may also play a role in the renin-angiotensin system by converting prorenin into renin. This is Plasma kallikrein (KLKB1) from Homo sapiens (Human).